Reading from the N-terminus, the 189-residue chain is MAERGSDIRPGHVLEHNNALYLVVKVMHTQPGKGGAYIQAEMKNLKTGAKQYERFRADGDIKRAIVDESDYQYIYGDGSMITIMHLKTYEQLTISKDILGDKSIYLQDNIIITLVFYNGEIISAKVPDYVTLQVVETEAVIKGQTVSSSAYKVAMLENNQRISVPTFIKPGDRIVVYTPDDSYYERAKG.

Belongs to the elongation factor P family.

It is found in the cytoplasm. It participates in protein biosynthesis; polypeptide chain elongation. Functionally, involved in peptide bond synthesis. Stimulates efficient translation and peptide-bond synthesis on native or reconstituted 70S ribosomes in vitro. Probably functions indirectly by altering the affinity of the ribosome for aminoacyl-tRNA, thus increasing their reactivity as acceptors for peptidyl transferase. This Ehrlichia chaffeensis (strain ATCC CRL-10679 / Arkansas) protein is Elongation factor P.